The sequence spans 224 residues: Deoxyribose-phosphate aldolase (224 aa).

The active-site Proton donor/acceptor is the Asp-92. Lys-155 acts as the Schiff-base intermediate with acetaldehyde in catalysis. The active-site Proton donor/acceptor is the Lys-184.

This sequence belongs to the DeoC/FbaB aldolase family. DeoC type 1 subfamily.

The protein resides in the cytoplasm. It carries out the reaction 2-deoxy-D-ribose 5-phosphate = D-glyceraldehyde 3-phosphate + acetaldehyde. Its pathway is carbohydrate degradation; 2-deoxy-D-ribose 1-phosphate degradation; D-glyceraldehyde 3-phosphate and acetaldehyde from 2-deoxy-alpha-D-ribose 1-phosphate: step 2/2. Catalyzes a reversible aldol reaction between acetaldehyde and D-glyceraldehyde 3-phosphate to generate 2-deoxy-D-ribose 5-phosphate. The chain is Deoxyribose-phosphate aldolase from Shouchella clausii (strain KSM-K16) (Alkalihalobacillus clausii).